Reading from the N-terminus, the 145-residue chain is MIKCFDKNNEVYNLIKNLTERLNIEILEVNIFRNKNGGKIQIVLYSKDFSLGIDLLTDLHKMILLILEASLEYSFTLELSTPGIDRRIKSDREFQIFEGKKIKLMLDNEFEEGFILESKSKSFIFKTESKELNVSYSDVKKARLV.

Belongs to the RimP family.

It is found in the cytoplasm. Functionally, required for maturation of 30S ribosomal subunits. The chain is Ribosome maturation factor RimP from Borrelia garinii subsp. bavariensis (strain ATCC BAA-2496 / DSM 23469 / PBi) (Borreliella bavariensis).